The following is a 185-amino-acid chain: Ion-translocating oxidoreductase complex subunit B (185 aa).

Positions 1–26 (MNHILLIILIFAALALIFGLLLGFAA) are hydrophobic. The 59-residue stretch at 32–90 (ESDPIVDQLDALLPQTQCGQCGYPGCRPYAEAIANGDSINKCVPGGAQTIQNIADLMGV) folds into the 4Fe-4S domain. [4Fe-4S] cluster is bound by residues Cys49, Cys52, Cys57, Cys73, Cys115, Cys118, Cys121, Cys125, Cys145, Cys148, Cys151, and Cys155. 4Fe-4S ferredoxin-type domains lie at 106–135 (RVAF…GAPK) and 136–165 (LMHT…MIEL).

Belongs to the 4Fe4S bacterial-type ferredoxin family. RnfB subfamily. As to quaternary structure, the complex is composed of six subunits: RnfA, RnfB, RnfC, RnfD, RnfE and RnfG. [4Fe-4S] cluster serves as cofactor.

The protein localises to the cell inner membrane. In terms of biological role, part of a membrane-bound complex that couples electron transfer with translocation of ions across the membrane. This is Ion-translocating oxidoreductase complex subunit B from Tolumonas auensis (strain DSM 9187 / NBRC 110442 / TA 4).